The following is a 444-amino-acid chain: Zinc finger protein ZIC 1 (444 aa).

The C2H2-type 1 zinc-finger motif lies at 222–257 (LICKWIEPEQLANPKKSCNKTFSTMHELVTHVTVEH). The segment at 271–293 (EECPREGKPFKAKYKLVNHIRVH) adopts a C2H2-type 2; degenerate zinc-finger fold. 3 C2H2-type zinc fingers span residues 299–323 (FPCP…KRTH), 329–353 (FKCE…MHVH), and 359–381 (YLCK…MKVH). Residues 372–432 (SSLRKHMKVH…SSAGHHTASH (61 aa)) form a disordered region. The span at 383-432 (SSSQGSQPSPAASSGYESSTPPTIVSPSTENQTASSLSPSSSAGHHTASH) shows a compositional bias: low complexity.

This sequence belongs to the GLI C2H2-type zinc-finger protein family.

It is found in the nucleus. Its subcellular location is the cytoplasm. Functionally, acts as a transcriptional activator. Involved in neurogenesis. Plays important roles in the early stage of organogenesis of the CNS, as well as during dorsal spinal cord development and maturation of the cerebellum. Binds to the minimal GLI-consensus sequence 5'-TGGGTGGTC-3'. This chain is Zinc finger protein ZIC 1 (ZIC1), found in Gallus gallus (Chicken).